Consider the following 453-residue polypeptide: Bifunctional protein GlmU (453 aa).

The segment at 1–231 is pyrophosphorylase; it reads MERTCLAIIL…EVEMTGCNNR (231 aa). UDP-N-acetyl-alpha-D-glucosamine contacts are provided by residues 10–13, lysine 24, glutamine 77, 82–83, 105–107, glycine 143, glutamate 157, asparagine 172, and asparagine 229; these read LAAG, GT, and YGD. Aspartate 107 contributes to the Mg(2+) binding site. Asparagine 229 provides a ligand contact to Mg(2+). The segment at 232–252 is linker; sequence AELAFIERLWQERRRHELMLS. Positions 253–453 are N-acetyltransferase; sequence GVTMIAPETV…AIKAAKKGSH (201 aa). Residues arginine 318 and lysine 336 each contribute to the UDP-N-acetyl-alpha-D-glucosamine site. Histidine 348 acts as the Proton acceptor in catalysis. Residues tyrosine 351 and asparagine 362 each contribute to the UDP-N-acetyl-alpha-D-glucosamine site. Residues alanine 365, 371 to 372, serine 390, serine 408, and arginine 425 contribute to the acetyl-CoA site; that span reads NY.

In the N-terminal section; belongs to the N-acetylglucosamine-1-phosphate uridyltransferase family. The protein in the C-terminal section; belongs to the transferase hexapeptide repeat family. In terms of assembly, homotrimer. It depends on Mg(2+) as a cofactor.

It is found in the cytoplasm. The enzyme catalyses alpha-D-glucosamine 1-phosphate + acetyl-CoA = N-acetyl-alpha-D-glucosamine 1-phosphate + CoA + H(+). It carries out the reaction N-acetyl-alpha-D-glucosamine 1-phosphate + UTP + H(+) = UDP-N-acetyl-alpha-D-glucosamine + diphosphate. The protein operates within nucleotide-sugar biosynthesis; UDP-N-acetyl-alpha-D-glucosamine biosynthesis; N-acetyl-alpha-D-glucosamine 1-phosphate from alpha-D-glucosamine 6-phosphate (route II): step 2/2. It participates in nucleotide-sugar biosynthesis; UDP-N-acetyl-alpha-D-glucosamine biosynthesis; UDP-N-acetyl-alpha-D-glucosamine from N-acetyl-alpha-D-glucosamine 1-phosphate: step 1/1. It functions in the pathway bacterial outer membrane biogenesis; LPS lipid A biosynthesis. Its function is as follows. Catalyzes the last two sequential reactions in the de novo biosynthetic pathway for UDP-N-acetylglucosamine (UDP-GlcNAc). The C-terminal domain catalyzes the transfer of acetyl group from acetyl coenzyme A to glucosamine-1-phosphate (GlcN-1-P) to produce N-acetylglucosamine-1-phosphate (GlcNAc-1-P), which is converted into UDP-GlcNAc by the transfer of uridine 5-monophosphate (from uridine 5-triphosphate), a reaction catalyzed by the N-terminal domain. The chain is Bifunctional protein GlmU from Rhizobium rhizogenes (strain K84 / ATCC BAA-868) (Agrobacterium radiobacter).